Consider the following 403-residue polypeptide: S-adenosylmethionine synthase (403 aa).

Residue histidine 17 coordinates ATP. Position 19 (aspartate 19) interacts with Mg(2+). K(+) is bound at residue glutamate 45. L-methionine contacts are provided by glutamate 58 and glutamine 104. The flexible loop stretch occupies residues 104 to 114 (QSPDIAQGVDT). ATP contacts are provided by residues 179 to 181 (DGK), 250 to 251 (KF), aspartate 259, 265 to 266 (RK), alanine 282, and lysine 286. Aspartate 259 lines the L-methionine pocket. An L-methionine-binding site is contributed by lysine 290.

It belongs to the AdoMet synthase family. As to quaternary structure, homotetramer; dimer of dimers. Mg(2+) is required as a cofactor. Requires K(+) as cofactor.

The protein localises to the cytoplasm. It catalyses the reaction L-methionine + ATP + H2O = S-adenosyl-L-methionine + phosphate + diphosphate. Its pathway is amino-acid biosynthesis; S-adenosyl-L-methionine biosynthesis; S-adenosyl-L-methionine from L-methionine: step 1/1. Its function is as follows. Catalyzes the formation of S-adenosylmethionine (AdoMet) from methionine and ATP. The overall synthetic reaction is composed of two sequential steps, AdoMet formation and the subsequent tripolyphosphate hydrolysis which occurs prior to release of AdoMet from the enzyme. In Mycobacterium bovis (strain BCG / Pasteur 1173P2), this protein is S-adenosylmethionine synthase.